The primary structure comprises 286 residues: Ribosomal RNA small subunit methyltransferase H (286 aa).

S-adenosyl-L-methionine-binding positions include 30-32, Asp-49, Phe-88, Asp-97, and Gln-104; that span reads GGH. A disordered region spans residues 260-286; sequence HPLQPSDEESFNNPASRSAKLRALEMR.

Belongs to the methyltransferase superfamily. RsmH family.

It is found in the cytoplasm. It carries out the reaction cytidine(1402) in 16S rRNA + S-adenosyl-L-methionine = N(4)-methylcytidine(1402) in 16S rRNA + S-adenosyl-L-homocysteine + H(+). In terms of biological role, specifically methylates the N4 position of cytidine in position 1402 (C1402) of 16S rRNA. The sequence is that of Ribosomal RNA small subunit methyltransferase H from Solibacter usitatus (strain Ellin6076).